We begin with the raw amino-acid sequence, 206 residues long: Regulator of rDNA transcription 14 (206 aa).

The disordered stretch occupies residues 178–206 (FVKDHRYPGLTPGLAPVGLSDEEDSSEED). Phosphoserine occurs at positions 197, 202, and 203. Positions 197-206 (SDEEDSSEED) are enriched in acidic residues.

This sequence belongs to the RRT14 family.

The protein resides in the nucleus. It is found in the nucleolus. Involved in ribosome biogenesis, probably through modulation of rDNA transcription. The polypeptide is Regulator of rDNA transcription 14 (RRT14) (Saccharomyces cerevisiae (strain JAY291) (Baker's yeast)).